The following is a 285-amino-acid chain: MEIIKEPSALRELAGQWTRQGRSVGFVPTMGYLHAGHESLMRLARGRAETVVASVFVNPTQFGPGEDLNAYPRDLERDAALAKAAGVDVLFAPSPEAMYEPAAATWVEVPTLARHLCGASRPTHFRGVCTVVSKLFLLVRPTVAVFGQKDWQQLAILRRMNADLGFGVEIVGGPIVREADGLALSSRNVRLTPQEREQAPGINQGLALAEAMVRDGETAAGRILDAVRAHYAAHVPLGEIDYLSCVDPDSLEMVEPIDRPALFATAVRFSAVRLIDNRLAADLPR.

Methionine 30–histidine 37 serves as a coordination point for ATP. The Proton donor role is filled by histidine 37. Glutamine 61 is a (R)-pantoate binding site. Glutamine 61 is a binding site for beta-alanine. Residue glycine 147–aspartate 150 participates in ATP binding. Position 153 (glutamine 153) interacts with (R)-pantoate. Residues valine 176 and leucine 184–arginine 187 each bind ATP.

The protein belongs to the pantothenate synthetase family. As to quaternary structure, homodimer.

Its subcellular location is the cytoplasm. It catalyses the reaction (R)-pantoate + beta-alanine + ATP = (R)-pantothenate + AMP + diphosphate + H(+). The protein operates within cofactor biosynthesis; (R)-pantothenate biosynthesis; (R)-pantothenate from (R)-pantoate and beta-alanine: step 1/1. In terms of biological role, catalyzes the condensation of pantoate with beta-alanine in an ATP-dependent reaction via a pantoyl-adenylate intermediate. This chain is Pantothenate synthetase, found in Solidesulfovibrio magneticus (strain ATCC 700980 / DSM 13731 / RS-1) (Desulfovibrio magneticus).